The primary structure comprises 305 residues: UDP-N-acetylenolpyruvoylglucosamine reductase 2 (305 aa).

The 165-residue stretch at 33–197 (VGGKADVFVA…LEARFELEEG (165 aa)) folds into the FAD-binding PCMH-type domain. Residue R176 is part of the active site. S226 (proton donor) is an active-site residue. Residue E296 is part of the active site.

This sequence belongs to the MurB family. It depends on FAD as a cofactor.

Its subcellular location is the cytoplasm. The catalysed reaction is UDP-N-acetyl-alpha-D-muramate + NADP(+) = UDP-N-acetyl-3-O-(1-carboxyvinyl)-alpha-D-glucosamine + NADPH + H(+). It participates in cell wall biogenesis; peptidoglycan biosynthesis. In terms of biological role, cell wall formation. This chain is UDP-N-acetylenolpyruvoylglucosamine reductase 2 (murB2), found in Bacillus cereus (strain ATCC 14579 / DSM 31 / CCUG 7414 / JCM 2152 / NBRC 15305 / NCIMB 9373 / NCTC 2599 / NRRL B-3711).